The primary structure comprises 473 residues: ATP synthase subunit beta (473 aa).

153 to 160 (GGAGVGKT) provides a ligand contact to ATP.

The protein belongs to the ATPase alpha/beta chains family. As to quaternary structure, F-type ATPases have 2 components, CF(1) - the catalytic core - and CF(0) - the membrane proton channel. CF(1) has five subunits: alpha(3), beta(3), gamma(1), delta(1), epsilon(1). CF(0) has three main subunits: a(1), b(2) and c(9-12). The alpha and beta chains form an alternating ring which encloses part of the gamma chain. CF(1) is attached to CF(0) by a central stalk formed by the gamma and epsilon chains, while a peripheral stalk is formed by the delta and b chains.

The protein resides in the cell inner membrane. It catalyses the reaction ATP + H2O + 4 H(+)(in) = ADP + phosphate + 5 H(+)(out). In terms of biological role, produces ATP from ADP in the presence of a proton gradient across the membrane. The catalytic sites are hosted primarily by the beta subunits. In Rickettsia canadensis (strain McKiel), this protein is ATP synthase subunit beta.